A 362-amino-acid polypeptide reads, in one-letter code: Chorismate synthase (362 aa).

An NADP(+)-binding site is contributed by Arg47. FMN-binding positions include 124 to 126 (RSS), Gly286, 301 to 305 (KPTAT), and Arg327.

Belongs to the chorismate synthase family. In terms of assembly, homotetramer. It depends on FMNH2 as a cofactor.

It catalyses the reaction 5-O-(1-carboxyvinyl)-3-phosphoshikimate = chorismate + phosphate. It participates in metabolic intermediate biosynthesis; chorismate biosynthesis; chorismate from D-erythrose 4-phosphate and phosphoenolpyruvate: step 7/7. In terms of biological role, catalyzes the anti-1,4-elimination of the C-3 phosphate and the C-6 proR hydrogen from 5-enolpyruvylshikimate-3-phosphate (EPSP) to yield chorismate, which is the branch point compound that serves as the starting substrate for the three terminal pathways of aromatic amino acid biosynthesis. This reaction introduces a second double bond into the aromatic ring system. The protein is Chorismate synthase of Nostoc punctiforme (strain ATCC 29133 / PCC 73102).